The following is a 618-amino-acid chain: ADP,ATP carrier protein 2, chloroplastic (618 aa).

The N-terminal 76 residues, 1-76 (MEGLIQTRGI…KERSRGFICK (76 aa)), are a transit peptide targeting the chloroplast. At Ala-77 the chain carries N-acetylalanine. The next 11 membrane-spanning stretches (helical) occupy residues 110-130 (LKKI…YTIL), 148-168 (IIPF…MLLY), 179-199 (ALFY…GFVM), 237-257 (LFYV…FWGF), 270-289 (FYPL…GRTV), 312-332 (AMMS…WWVN), 368-388 (LATL…TWKS), 401-421 (SAFM…MMLL), 441-461 (VLLL…PFAP), 464-484 (AKLG…QNIF), and 542-562 (LANS…AWLA). Positions 586-618 (RASSVKIPVVSQEDAPSGETTSQLSEKSTPTGI) are disordered. Polar residues predominate over residues 603–618 (GETTSQLSEKSTPTGI).

Belongs to the ADP/ATP translocase tlc (TC 2.A.12.2) family.

It localises to the plastid. The protein resides in the chloroplast membrane. This is ADP,ATP carrier protein 2, chloroplastic (AATP2) from Arabidopsis thaliana (Mouse-ear cress).